Reading from the N-terminus, the 281-residue chain is Homoserine kinase (281 aa).

83 to 93 (PVSSGLGSSAA) serves as a coordination point for ATP.

The protein belongs to the GHMP kinase family. Homoserine kinase subfamily.

It localises to the cytoplasm. The catalysed reaction is L-homoserine + ATP = O-phospho-L-homoserine + ADP + H(+). The protein operates within amino-acid biosynthesis; L-threonine biosynthesis; L-threonine from L-aspartate: step 4/5. Catalyzes the ATP-dependent phosphorylation of L-homoserine to L-homoserine phosphate. The sequence is that of Homoserine kinase from Thermotoga petrophila (strain ATCC BAA-488 / DSM 13995 / JCM 10881 / RKU-1).